Consider the following 505-residue polypeptide: Folate transporter 1 (505 aa).

Helical transmembrane passes span 58-78 (SLIA…IYLL), 89-109 (LSIV…WAVI), 122-142 (YYLL…GLIT), and 146-166 (LFIT…CNVI). N-linked (GlcNAc...) asparagine glycans are attached at residues asparagine 177, asparagine 181, and asparagine 186. The next 2 helical transmembrane spans lie at 192–212 (AFRK…LLLI) and 216–236 (HIFL…FFII). An N-linked (GlcNAc...) asparagine glycan is attached at asparagine 240. The next 5 membrane-spanning stretches (helical) occupy residues 266 to 286 (IIFI…FFYI), 300 to 320 (MAMF…LFFT), 326 to 346 (KLLL…LVVI), 352 to 372 (FLFI…EFIA), and 405 to 425 (FASI…NITS). Asparagine 427 is a glycosylation site (N-linked (GlcNAc...) asparagine). A helical membrane pass occupies residues 431–451 (LPYMIIICCLTNIIPIFFLYI). The N-linked (GlcNAc...) asparagine glycan is linked to asparagine 454.

It belongs to the major facilitator superfamily. Folate-biopterin transporter (TC 2.A.71) family.

It localises to the cell membrane. It carries out the reaction folate(in) + H(+)(in) = folate(out) + H(+)(out). Its activity is regulated as follows. Transport of folates is inhibited by probenecid and methotrexate. Folate transporter with broad substrate specificity. Transports folic acid, folinic acid, pteroic acid, dihydropteroic acid, the folate precursor p-amino benzoic acid (pABA) and the human folate catabolite pABA monoglutamate. The chain is Folate transporter 1 from Plasmodium falciparum (isolate 3D7).